The chain runs to 145 residues: 3-dehydroquinate dehydratase (145 aa).

The active-site Proton acceptor is tyrosine 24. Residues asparagine 75, histidine 81, and aspartate 88 each coordinate substrate. The active-site Proton donor is histidine 101. Substrate contacts are provided by residues 102–103 (IS) and arginine 112.

The protein belongs to the type-II 3-dehydroquinase family. As to quaternary structure, homododecamer.

It catalyses the reaction 3-dehydroquinate = 3-dehydroshikimate + H2O. The protein operates within metabolic intermediate biosynthesis; chorismate biosynthesis; chorismate from D-erythrose 4-phosphate and phosphoenolpyruvate: step 3/7. In terms of biological role, catalyzes a trans-dehydration via an enolate intermediate. The chain is 3-dehydroquinate dehydratase from Rhizobium johnstonii (strain DSM 114642 / LMG 32736 / 3841) (Rhizobium leguminosarum bv. viciae).